A 214-amino-acid chain; its full sequence is Transcriptional activator protein ExaE (214 aa).

Residues 2–118 enclose the Response regulatory domain; that stretch reads GILLVDDHPM…VVLEAVRRVL (117 aa). Aspartate 53 carries the post-translational modification 4-aspartylphosphate. The HTH luxR-type domain occupies 143-208; that stretch reads GNARLQGLTQ…ELVHLAIEAG (66 aa). A DNA-binding region (H-T-H motif) is located at residues 167–186; it reads TRLIAQQLCISAKTVSNYLT.

Positive regulator of the expression of the gene qedA and the activity of ADH I but does not affect the activities of ADH IIB or ADH IIG. This Pseudomonas putida (Arthrobacter siderocapsulatus) protein is Transcriptional activator protein ExaE.